The sequence spans 200 residues: Dual specificity tyrosine-phosphorylation-regulated kinase 1A (200 aa).

Tyr-41 is subject to Phosphotyrosine; by autocatalysis. Lys-58 contributes to the ATP binding site. At Tyr-76 the chain carries Phosphotyrosine; by autocatalysis. At Ser-88 the chain carries Phosphoserine; by autocatalysis. Phosphothreonine; by autocatalysis is present on Thr-122.

It belongs to the protein kinase superfamily. CMGC Ser/Thr protein kinase family. MNB/DYRK subfamily. In terms of assembly, interacts with RAD54L2/ARIP4. Interacts with CRY2. Interacts with RANBP9. Interacts with WDR68. Interacts with SIRT1. Can also autophosphorylate on serine and threonine residues (in vitro). Autophosphorylated on numerous tyrosine residues.

Its subcellular location is the nucleus. The catalysed reaction is L-tyrosyl-[protein] + ATP = O-phospho-L-tyrosyl-[protein] + ADP + H(+). It carries out the reaction L-seryl-[protein] + ATP = O-phospho-L-seryl-[protein] + ADP + H(+). It catalyses the reaction L-threonyl-[protein] + ATP = O-phospho-L-threonyl-[protein] + ADP + H(+). The enzyme catalyses [DNA-directed RNA polymerase] + ATP = phospho-[DNA-directed RNA polymerase] + ADP + H(+). Inhibited by RANBP9. Dual-specificity kinase which possesses both serine/threonine and tyrosine kinase activities. Exhibits a substrate preference for proline at position P+1 and arginine at position P-3. Plays an important role in double-strand breaks (DSBs) repair following DNA damage. Mechanistically, phosphorylates RNF169 and increases its ability to block accumulation of TP53BP1 at the DSB sites thereby promoting homologous recombination repair (HRR). Also acts as a positive regulator of transcription by acting as a CTD kinase that mediates phosphorylation of the CTD (C-terminal domain) of the large subunit of RNA polymerase II (RNAP II) POLR2A. May play a role in a signaling pathway regulating nuclear functions of cell proliferation. Modulates alternative splicing by phosphorylating the splice factor SRSF6. Has pro-survival function and negatively regulates the apoptotic process. Promotes cell survival upon genotoxic stress through phosphorylation of SIRT1. This in turn inhibits p53/TP53 activity and apoptosis. Phosphorylates SEPTIN4, SEPTIN5 and SF3B1 at 'Thr-434'. This Oryctolagus cuniculus (Rabbit) protein is Dual specificity tyrosine-phosphorylation-regulated kinase 1A.